We begin with the raw amino-acid sequence, 178 residues long: uncharacterized protein (178 aa).

The signal sequence occupies residues 1–23; the sequence is MNYSVIWAITILILGLVLTLAWA.

This is an uncharacterized protein from Invertebrate iridescent virus 3 (IIV-3).